Reading from the N-terminus, the 866-residue chain is Dimethylglycine dehydrogenase, mitochondrial (866 aa).

The N-terminal 50 residues, 1–50 (MLRPGAQLLRGLLLRSCPLQGSPGRPRSVCGREGEEKPPLSAETQWKDRA), are a transit peptide targeting the mitochondrion. Positions 20–42 (QGSPGRPRSVCGREGEEKPPLSA) are disordered. FAD-binding positions include 59–60 (CV), 80–81 (EK), and 87–95 (GSTWHAAGL). Residue H91 is modified to Tele-8alpha-FAD histidine. K114 is modified (N6-acetyllysine). At K148 the chain carries N6-acetyllysine; alternate. Position 148 is an N6-succinyllysine; alternate (K148). Position 168 is an N6-acetyllysine (K168). Position 219 (V219) interacts with FAD. N6-acetyllysine is present on K223. W251 lines the FAD pocket. N6-succinyllysine occurs at positions 317 and 319. Residues K335 and K360 each carry the N6-acetyllysine modification. Residue 397–402 (FGYGII) coordinates FAD. N6-acetyllysine; alternate occurs at positions 434 and 523. N6-succinyllysine; alternate occurs at positions 434 and 523. (6S)-5,6,7,8-tetrahydrofolate is bound at residue 580–582 (ELT). Position 655 is an N6-acetyllysine; alternate (K655). K655 is modified (N6-succinyllysine; alternate). (6S)-5,6,7,8-tetrahydrofolate is bound by residues Y676, 683–685 (ELY), and Y744. K764 carries the N6-acetyllysine modification. K795 bears the N6-succinyllysine mark.

Belongs to the GcvT family. In terms of assembly, monomer. It depends on FAD as a cofactor.

The protein resides in the mitochondrion. The catalysed reaction is (6S)-5,6,7,8-tetrahydrofolyl-(gamma-L-Glu)(n) + N,N-dimethylglycine + oxidized [electron-transfer flavoprotein] + H(+) = (6R)-5,10-methylenetetrahydrofolyl-(gamma-L-Glu)(n) + sarcosine + reduced [electron-transfer flavoprotein]. It participates in amine and polyamine degradation; betaine degradation; sarcosine from betaine: step 2/2. Catalyzes the demethylation of N,N-dimethylglycine to sarcosine. Also has activity with sarcosine in vitro. The polypeptide is Dimethylglycine dehydrogenase, mitochondrial (DMGDH) (Homo sapiens (Human)).